A 303-amino-acid chain; its full sequence is uncharacterized protein (303 aa).

This is an uncharacterized protein from Archaeoglobus fulgidus (strain ATCC 49558 / DSM 4304 / JCM 9628 / NBRC 100126 / VC-16).